A 1760-amino-acid polypeptide reads, in one-letter code: Chitin synthase csmB (1760 aa).

The span at 1–17 (MSNRFSVYSSHSTGVSS) shows a compositional bias: low complexity. A disordered region spans residues 1-23 (MSNRFSVYSSHSTGVSSARPSAP). The Myosin motor domain occupies 1 to 374 (MSNRFSVYSS…TVSITVVDIP (374 aa)). An N-linked (GlcNAc...) asparagine glycan is attached at Asn-275. Positions 344-363 (LDNDPSTSGGSGPGGQWTDD) are disordered. Position 374 (Pro-374) is a region of interest, actin-binding. 2 consecutive transmembrane segments (helical) span residues 731 to 751 (IWVGFVWALTFWIPSFALRWI) and 767 to 787 (LVLMLIILLFNGVVCFYIIAF). N-linked (GlcNAc...) asparagine glycans are attached at residues Asn-878, Asn-906, and Asn-995. Residues 1029 to 1049 (ILLSFTVLICAVILVKFVSAL) traverse the membrane as a helical segment. Residue Asn-1394 is glycosylated (N-linked (GlcNAc...) asparagine). Transmembrane regions (helical) follow at residues 1419–1439 (FVVLVDLLGTVILPATCVYLG), 1452–1472 (FPMISIVILAGVYGLQAIIFL), and 1480–1500 (IGWMIIYICAYPIYNFILPLY). N-linked (GlcNAc...) asparagine glycans are attached at residues Asn-1584 and Asn-1652. The DEK-C domain maps to 1702 to 1758 (GPDEGAITEAIRACLAEVDLDTVTKKQVRALVEQRLQTTLMGDKRTFLDRQIDHELA).

The protein in the N-terminal section; belongs to the TRAFAC class myosin-kinesin ATPase superfamily. Myosin family. This sequence in the C-terminal section; belongs to the chitin synthase family. Class V subfamily.

The protein localises to the cell membrane. It is found in the cell septum. The protein resides in the cell tip. It catalyses the reaction [(1-&gt;4)-N-acetyl-beta-D-glucosaminyl](n) + UDP-N-acetyl-alpha-D-glucosamine = [(1-&gt;4)-N-acetyl-beta-D-glucosaminyl](n+1) + UDP + H(+). In terms of biological role, polymerizes chitin, a structural polymer of the cell wall and septum, by transferring the sugar moiety of UDP-GlcNAc to the non-reducing end of the growing chitin polymer. Plays an important role in septal growth or maintenance. Mediates colony spore formation. This is Chitin synthase csmB from Aspergillus niger (strain ATCC MYA-4892 / CBS 513.88 / FGSC A1513).